Consider the following 1419-residue polypeptide: Formin-1 (1419 aa).

The tract at residues 1-622 (MEGTHCTLQL…TAEPQHQSPP (622 aa)) is microtubule-binding. Disordered regions lie at residues 138-194 (DWQG…MGKD), 262-331 (LGRE…KVVA), 343-641 (VVKT…TPKD), and 685-711 (SLTE…DTEE). Basic residues predominate over residues 151 to 163 (RSTHGNKKPRRSS). The span at 298–317 (SHQDPEKHPEAEKDEMEKPA) shows a compositional bias: basic and acidic residues. Residues 394-411 (RSSQSPAGETASISSVSA) are compositionally biased toward polar residues. Positions 425–438 (IESEKLDEAPEGKR) are enriched in basic and acidic residues. The tract at residues 456–842 (NKRRAGLPLG…LNISSLSQLS (387 aa)) is mediates interaction with alpha-catenin. A compositionally biased stretch (polar residues) spans 504–517 (FNNSASQSSTHKQT). The span at 520–529 (VPSPLSPRLP) shows a compositional bias: pro residues. Residues 614 to 623 (AEPQHQSPPG) are compositionally biased toward polar residues. A compositionally biased stretch (basic and acidic residues) spans 685–694 (SLTEQDDRTP). Residues 720–774 (AEYQAAILHLKREHKEEIENLQAQFELRAFHIRGEHAMITARLEETIENLKHELE) adopt a coiled-coil conformation. Disordered stretches follow at residues 859-978 (GMAS…AIEP) and 1390-1419 (SEKK…VTTN). Pro residues-rich tracts occupy residues 868 to 882 (LPPP…PPLP) and 890 to 958 (PAPP…PPPG). Residues 870–957 (PPPASIPPPP…PPGLAPPPPP (88 aa)) form the FH1 domain. In terms of domain architecture, FH2 spans 972-1388 (RKPAIEPSCP…KMAQESVSKL (417 aa)).

Belongs to the formin homology family. Cappuccino subfamily. Interacts with alpha-catenin and may interact with tubulin. In terms of processing, phosphorylated on serine and possibly threonine residues.

Its subcellular location is the nucleus. The protein localises to the cytoplasm. It localises to the cell junction. The protein resides in the adherens junction. It is found in the cell membrane. In terms of biological role, plays a role in the formation of adherens junction and the polymerization of linear actin cables. This chain is Formin-1 (FMN1), found in Homo sapiens (Human).